The chain runs to 280 residues: Acetyl-coenzyme A carboxylase carboxyl transferase subunit beta (280 aa).

The region spanning 25-280 (VMRECPICHA…RLHTKENAYG (256 aa)) is the CoA carboxyltransferase N-terminal domain. Cys29, Cys32, Cys47, and Cys50 together coordinate Zn(2+). The C4-type zinc finger occupies 29–50 (CPICHAKFLSMRLGRDHTCPKC).

The protein belongs to the AccD/PCCB family. As to quaternary structure, acetyl-CoA carboxylase is a heterohexamer composed of biotin carboxyl carrier protein (AccB), biotin carboxylase (AccC) and two subunits each of ACCase subunit alpha (AccA) and ACCase subunit beta (AccD). Zn(2+) serves as cofactor.

It localises to the cytoplasm. It catalyses the reaction N(6)-carboxybiotinyl-L-lysyl-[protein] + acetyl-CoA = N(6)-biotinyl-L-lysyl-[protein] + malonyl-CoA. The protein operates within lipid metabolism; malonyl-CoA biosynthesis; malonyl-CoA from acetyl-CoA: step 1/1. Component of the acetyl coenzyme A carboxylase (ACC) complex. Biotin carboxylase (BC) catalyzes the carboxylation of biotin on its carrier protein (BCCP) and then the CO(2) group is transferred by the transcarboxylase to acetyl-CoA to form malonyl-CoA. The chain is Acetyl-coenzyme A carboxylase carboxyl transferase subunit beta from Lactobacillus helveticus (strain DPC 4571).